A 77-amino-acid polypeptide reads, in one-letter code: Protein AC43 (77 aa).

Plays a role in the production of occlusion bodies as well as expression of the polyhedrin gene. This Autographa californica nuclear polyhedrosis virus (AcMNPV) protein is Protein AC43.